The primary structure comprises 408 residues: Argininosuccinate synthase (408 aa).

ATP-binding positions include 12–20 (AYSGGLDTS) and alanine 39. Residues tyrosine 92 and serine 97 each contribute to the L-citrulline site. An ATP-binding site is contributed by glycine 122. Threonine 124, asparagine 128, and aspartate 129 together coordinate L-aspartate. Asparagine 128 contacts L-citrulline. Arginine 132, serine 183, serine 192, glutamate 268, and tyrosine 280 together coordinate L-citrulline.

Belongs to the argininosuccinate synthase family. Type 1 subfamily. In terms of assembly, homotetramer.

It is found in the cytoplasm. It catalyses the reaction L-citrulline + L-aspartate + ATP = 2-(N(omega)-L-arginino)succinate + AMP + diphosphate + H(+). It participates in amino-acid biosynthesis; L-arginine biosynthesis; L-arginine from L-ornithine and carbamoyl phosphate: step 2/3. The chain is Argininosuccinate synthase from Caulobacter vibrioides (strain ATCC 19089 / CIP 103742 / CB 15) (Caulobacter crescentus).